Consider the following 583-residue polypeptide: uncharacterized protein (583 aa).

24-140 (ILADIDDEQL…SAMLRAMARM (117 aa)) contacts a nucleoside 3',5'-cyclic phosphate. Residues 309-469 (LVMAGGGARG…LNNLPANVMC (161 aa)) enclose the PNPLA domain. The GXGXXG motif lies at 313–318 (GGGARG). The GXSXG motif lies at 340-344 (GTSSG). The Nucleophile role is filled by Ser-342. Asp-456 (proton acceptor) is an active-site residue. A DGA/G motif is present at residues 456–458 (DGG).

It belongs to the NTE family.

This is an uncharacterized protein from Mycobacterium tuberculosis (strain CDC 1551 / Oshkosh).